The chain runs to 327 residues: Zinc finger protein 444 (327 aa).

Met-1 carries the post-translational modification N-acetylmethionine. A Glycyl lysine isopeptide (Lys-Gly) (interchain with G-Cter in SUMO2) cross-link involves residue Lys-8. Residues Ser-18 and Ser-104 each carry the phosphoserine modification. The SCAN box domain occupies 20–104; it reads WHRFRRFHLG…LEELWGPAAS (85 aa). Residues 101–171 are disordered; sequence PAASPDGSSA…SPPLAPGLPA (71 aa). Polar residues predominate over residues 106–118; the sequence is DGSSATRVPQDVT. Residues 134–148 are compositionally biased toward low complexity; it reads PLAGTAPGAEGPAPG. 2 C2H2-type zinc fingers span residues 179 to 201 and 207 to 229; these read TSCPECGKTSLKPAHLLRHRQSH and HACPECGKAFRRKEHLRRHRDTH. Residue Lys-190 forms a Glycyl lysine isopeptide (Lys-Gly) (interchain with G-Cter in SUMO2) linkage. Residues 220-243 are disordered; it reads EHLRRHRDTHPGSPGSPGPALRPL. Ser-235 carries the post-translational modification Phosphoserine. C2H2-type zinc fingers lie at residues 250–272 and 278–300; these read HACCECGKTFYWREHLVRHRKTH and FACWECGKGFGRREHVLRHQRIH. Residues 305 to 314 are compositionally biased toward low complexity; sequence ASAQGAVAPG. Residues 305-327 form a disordered region; the sequence is ASAQGAVAPGPDGGGPFPPWPLG.

The protein belongs to the krueppel C2H2-type zinc-finger protein family.

Its subcellular location is the nucleus. Functionally, transcriptional regulator. Binds to the 5'-flanking critical region of the SCARF1 promoter. The polypeptide is Zinc finger protein 444 (ZNF444) (Homo sapiens (Human)).